A 505-amino-acid polypeptide reads, in one-letter code: Aspartyl/glutamyl-tRNA(Asn/Gln) amidotransferase subunit B (505 aa).

The protein belongs to the GatB/GatE family. GatB subfamily. As to quaternary structure, heterotrimer of A, B and C subunits.

The catalysed reaction is L-glutamyl-tRNA(Gln) + L-glutamine + ATP + H2O = L-glutaminyl-tRNA(Gln) + L-glutamate + ADP + phosphate + H(+). It catalyses the reaction L-aspartyl-tRNA(Asn) + L-glutamine + ATP + H2O = L-asparaginyl-tRNA(Asn) + L-glutamate + ADP + phosphate + 2 H(+). Its function is as follows. Allows the formation of correctly charged Asn-tRNA(Asn) or Gln-tRNA(Gln) through the transamidation of misacylated Asp-tRNA(Asn) or Glu-tRNA(Gln) in organisms which lack either or both of asparaginyl-tRNA or glutaminyl-tRNA synthetases. The reaction takes place in the presence of glutamine and ATP through an activated phospho-Asp-tRNA(Asn) or phospho-Glu-tRNA(Gln). This chain is Aspartyl/glutamyl-tRNA(Asn/Gln) amidotransferase subunit B, found in Corynebacterium jeikeium (strain K411).